Here is a 156-residue protein sequence, read N- to C-terminus: Transcription elongation factor GreA (156 aa).

A coiled-coil region spans residues 1-32 (MKKVRLTREGYEKLKKELEDLKRKFMYEISER).

Belongs to the GreA/GreB family.

In terms of biological role, necessary for efficient RNA polymerase transcription elongation past template-encoded arresting sites. The arresting sites in DNA have the property of trapping a certain fraction of elongating RNA polymerases that pass through, resulting in locked ternary complexes. Cleavage of the nascent transcript by cleavage factors such as GreA or GreB allows the resumption of elongation from the new 3'terminus. GreA releases sequences of 2 to 3 nucleotides. The sequence is that of Transcription elongation factor GreA from Thermotoga petrophila (strain ATCC BAA-488 / DSM 13995 / JCM 10881 / RKU-1).